The chain runs to 374 residues: PqqA peptide cyclase (374 aa).

The Radical SAM core domain maps to 7-222; sequence VTPPLWLLAE…VADYRQRMGA (216 aa). Positions 21, 25, and 28 each coordinate [4Fe-4S] cluster.

The protein belongs to the radical SAM superfamily. PqqE family. Interacts with PqqD. The interaction is necessary for activity of PqqE. [4Fe-4S] cluster is required as a cofactor.

It carries out the reaction [PQQ precursor protein] + S-adenosyl-L-methionine = E-Y cross-linked-[PQQ precursor protein] + 5'-deoxyadenosine + L-methionine + H(+). Its pathway is cofactor biosynthesis; pyrroloquinoline quinone biosynthesis. Catalyzes the cross-linking of a glutamate residue and a tyrosine residue in the PqqA protein as part of the biosynthesis of pyrroloquinoline quinone (PQQ). The protein is PqqA peptide cyclase of Kluyvera intermedia (Enterobacter intermedius).